The following is an 854-amino-acid chain: N-terminal acetyltransferase A complex subunit NAT1 (854 aa).

Position 2 is an N-acetylserine (Ser-2). 7 TPR repeats span residues 20–53, 54–87, 91–124, 126–162, 241–274, 384–417, and 452–485; these read ENDQ…DGSH, VDSL…IEGA, PICC…GSTN, QIYR…RANW, FGLL…NPDN, IWTN…TPTL, and RFIN…DDSV. Residues 623 to 667 adopt a coiled-coil conformation; sequence LKRKSDSLDENSDEIQNNGQNSSSQKKKAKKEAAAMNKRKETEAK. The segment at 626–668 is disordered; the sequence is KSDSLDENSDEIQNNGQNSSSQKKKAKKEAAAMNKRKETEAKS. Ser-674 is subject to Phosphoserine. One copy of the TPR 8 repeat lies at 728 to 761; sequence ALCFASLNKFAKRFGTTSGLFGSMAIVLLHATRN.

Component of the N-terminal acetyltransferase A (NatA) complex, which is composed of ARD1, NAT1 and NAT5. Can self-associate. NAT1 associates with the nascent polypeptide chain and the ribosome. The N-terminus is blocked.

It is found in the cytoplasm. Non-catalytic component of the NatA N-terminal acetyltransferase, which catalyzes acetylation of proteins beginning with Met-Ser, Met-Gly and Met-Ala. N-acetylation plays a role in normal eukaryotic translation and processing, protect against proteolytic degradation and protein turnover. NAT1 anchors ARD1 and NAT5 to the ribosome and may present the N termini of nascent polypeptides for acetylation. The protein is N-terminal acetyltransferase A complex subunit NAT1 (NAT1) of Saccharomyces cerevisiae (strain ATCC 204508 / S288c) (Baker's yeast).